Consider the following 1451-residue polypeptide: MESNNVEEVTDKFGGCLSLDTEKMGKYDRYRQKGKEAALNGELPRALELFQLAYQLQPSEKLKKRIQAIQDLIQREDEEDEEEEEEFVNVNNSGLKLYKGLYDKLYDHQKEGVAFLYSLYRDGRKGGILADDMGLGKTIQVISFLSGMYDAELANHTLLVMPTSLIKNWVREFAKWTPGMRVKEFHGSSKTERNRNLERIQRKGGVIITTYQMLINNYEQLGSNGHREFKWDYVILDEAHKIKTSSTKTAKSAHAIPAKNRVLLTGTPVQNNLREMWALFDFACQGSLLGTSKTFKTEYENPITRAREKDATPGEKALGLRISQNLTDIIKPYFLRRTKADVQQKKLKLEEGFEEEEDQENKCPNAREGVEMPSLTRKNDLIVWTYLSSVQEDIYNKFISLDQIKELLTTTRSPLAELTVLKKLCDHPRLLSQRAVIQLGLERGSDSELVHSDESESAVSQIDNISDHTLIEESGKLQFVVSLMECLREEGHRTLIFSQSRKMLDIMERVLRNRNFRLLRLDGTVTQLAEREKRISLFQTDKRYTIFLLTTQVGGVGITLTGANRVVIFDPSWNPATDAQAVDRAYRIGQTENVIIYRLITCGTVEEKIYRRQVFKDSLIRQTTGDKKNPFRYFSKQELRELFKLEDTRSSSTQQQLQAMHAQSRRSDTSLDHHIARLHSMEMFGISDHDLMFTKEPAADEDDPEDAESHHYIQTRVQKAQELMQAESELHGQLLDSMAQNTEPAWLRQMGQPNSSIRDRPAPPRIKNEPVTVDLTHNSFDEPEFEEDEQNLPSAEDAEMETASEDVEVIGDEDLGDKVISSEVEVVGEEVEVVAEEVEDAGEVEVVSEEVEGVGVEVEDVGVEVEDAGVEVEDAGVEVEDAGVEVEDAGEVEVVSGEGQVQPKSPQSGGEWNLQIVKTEVSPIAEKFADVITLDDTSDEADSSDFNTESKQQNSSQRFQSPSLQFPKLDDLSGASNTLGNEEVEPEKCHSQVLSSPLSQHEATTDEPFKAEMEMPHGNFNLLLEDSADMYFPEDEEVHEVEESAAEESPEFQLQMDVSGERLEEPSINHDKQNNGEFVNYNDSEVSKRESLLKIRSTPNESVDDSFVHSVRTKKRQVISDTEEEEEEEEESEKPCLTSSPFIDAISRLGSSTPKAVLVDGARLRRSLNASVASRRSFVVSLLENESDEESNEDKTKSSGASETCADELVEEVQTSSGDNSKSYETSEANGTLADELVEEEGEYREGKNTSDKVSESNETHSEEFAEEEKPSGDKSESYEISEASETHTDNSEEEIIGDHTGSYKISESSEADESVVEEEEPSGETLNTEESEMGEEEESAELIAGQEQEEWHSAVLESTGDVELDSNETMDQCAPKTVPVETHVLPVSSTNTAAEASDNKYNLLVLSGKQSLAEGRKQEALDFFLKAIDINTGDPEIQLLIIQLYRQLSQ.

A TPR 1 repeat occupies 27–60; sequence YDRYRQKGKEAALNGELPRALELFQLAYQLQPSE. The Helicase ATP-binding domain occupies 118–286; sequence SLYRDGRKGG…WALFDFACQG (169 aa). An ATP-binding site is contributed by 131 to 138; that stretch reads DDMGLGKT. The DEAH box signature appears at 237–240; that stretch reads DEAH. Positions 479–639 constitute a Helicase C-terminal domain; that stretch reads FVVSLMECLR…PFRYFSKQEL (161 aa). 7 disordered regions span residues 647 to 669, 778 to 804, 935 to 1006, 1035 to 1054, 1063 to 1083, 1096 to 1140, and 1182 to 1343; these read DTRS…RSDT, NSFD…ETAS, DDTS…ATTD, DEEV…EFQL, LEEP…NYND, RSTP…LTSS, and LLEN…SAEL. The segment covering 781–804 has biased composition (acidic residues); that stretch reads DEPEFEEDEQNLPSAEDAEMETAS. Polar residues-rich tracts occupy residues 944–964 and 992–1002; these read SDFN…SPSL and QVLSSPLSQHE. Ser-961 bears the Phosphoserine mark. Residues 1035-1050 are compositionally biased toward acidic residues; the sequence is DEEVHEVEESAAEESP. A compositionally biased stretch (basic and acidic residues) spans 1063-1074; it reads LEEPSINHDKQN. Acidic residues predominate over residues 1121 to 1132; that stretch reads DTEEEEEEEEES. Residues 1213-1230 are compositionally biased toward polar residues; sequence VQTSSGDNSKSYETSEAN. Positions 1244-1278 are enriched in basic and acidic residues; that stretch reads YREGKNTSDKVSESNETHSEEFAEEEKPSGDKSES. Residues 1310 to 1341 show a composition bias toward acidic residues; that stretch reads SEADESVVEEEEPSGETLNTEESEMGEEEESA. One copy of the TPR 2 repeat lies at 1402–1435; the sequence is YNLLVLSGKQSLAEGRKQEALDFFLKAIDINTGD.

It belongs to the SNF2/RAD54 helicase family.

The protein localises to the chromosome. The protein resides in the centromere. Its subcellular location is the kinetochore. It carries out the reaction ATP + H2O = ADP + phosphate + H(+). In terms of biological role, DNA helicase that acts as a tension sensor that associates with catenated DNA which is stretched under tension until it is resolved during anaphase. Functions as ATP-dependent DNA translocase. Can promote Holliday junction branch migration (in vitro). The chain is DNA excision repair protein ERCC-6-like (ercc6l) from Danio rerio (Zebrafish).